The following is a 406-amino-acid chain: Argininosuccinate synthase (406 aa).

Residues 14–22 (AYSGGLDTS) and A41 each bind ATP. Y92 and S97 together coordinate L-citrulline. ATP is bound at residue G122. Residues T124, N128, and D129 each coordinate L-aspartate. N128 provides a ligand contact to L-citrulline. R132, S181, S190, E266, and Y278 together coordinate L-citrulline.

It belongs to the argininosuccinate synthase family. Type 1 subfamily. Homotetramer.

It is found in the cytoplasm. It carries out the reaction L-citrulline + L-aspartate + ATP = 2-(N(omega)-L-arginino)succinate + AMP + diphosphate + H(+). The protein operates within amino-acid biosynthesis; L-arginine biosynthesis; L-arginine from L-ornithine and carbamoyl phosphate: step 2/3. The protein is Argininosuccinate synthase of Geobacter metallireducens (strain ATCC 53774 / DSM 7210 / GS-15).